Consider the following 953-residue polypeptide: MAETLPGSGDSGPGTASLGPGVAETGTRRLSELRVIDLRAELKKRNLDTGGNKSVLMERLKKAVKEEGQDPDEIGIELEATSKKSAKRCVKGLKMEEEGTEDNGLEDDSRDGQEDMEASLENLQNMGMMDMSVLDETEVANSSAPDFGEDGTDGLLDSFCDSKEYVAAQLRQLPAQPPEHAVDGEGFKNTLETSSLNFKVTPDIEESLLEPENEKILDILGETCKSEPVKEESSELEQPFAQDTSSVGPDRKLAEEEDLFDSAHPEEGDLDLASESTAHAQSSKADSLLAVVKREPAEQPGDGERTDCEPVGLEPAVEQSSAASELAEASSEELAEAPTEAPSPEARDSKEDGRKFDFDACNEVPPAPKESSTSEGADQKMSSFKEEKDIKPIIKDEKGRVGSGSGRNLWVSGLSSTTRATDLKNLFSKYGKVVGAKVVTNARSPGARCYGFVTMSTSDEATKCISHLHRTELHGRMISVEKAKNEPAGKKLSDRKECEVKKEKLSSVDRHHSVEIKIEKTVIKKEEKIEKKEEKKPEDIKKEEKDQDELKPGPTNRSRVTKSGSRGMERTVVMDKSKGEPVISVKTTSRSKERSSKSQDRKSESKEKRDILSFDKIKEQRERERQRQREREIRETERRREREQREREQRLEAFHERKEKARLQRERLQLECQRQRLERERMERERLERERMRVERERRKEQERIHREREELRRQQEQLRYEQERRPGRRPYDLDRRDDAYWPEGKRVAMEDRYRADFPRPDHRFHDFDHRDRGQYQDHAIDRREGSRPMMGDHRDGQHYGDDRHGHGGPPERHGRDSRDGWGGYGSDKRLSEGRGLPPPPRGGRDWGEHNQRLEEHQARAWQGAMDAGAASREHARWQGGERGLSGPSGPGHMASRGGVAGRGGFAQGGHSQGHVVPGGGLEGGGVASQDRGSRVPHPHPHPPPYPHFTRRY.

The tract at residues 1–29 is disordered; that stretch reads MAETLPGSGDSGPGTASLGPGVAETGTRR. Ala2 is subject to N-acetylalanine. The region spanning 30–64 is the SAP domain; that stretch reads LSELRVIDLRAELKKRNLDTGGNKSVLMERLKKAV. Ser54 bears the Phosphoserine mark. Lys65 is covalently cross-linked (Glycyl lysine isopeptide (Lys-Gly) (interchain with G-Cter in SUMO1); alternate). A Glycyl lysine isopeptide (Lys-Gly) (interchain with G-Cter in SUMO2); alternate cross-link involves residue Lys65. A disordered region spans residues 91 to 114; that stretch reads KGLKMEEEGTEDNGLEDDSRDGQE. Residue Lys94 forms a Glycyl lysine isopeptide (Lys-Gly) (interchain with G-Cter in SUMO2) linkage. The span at 98 to 114 shows a compositional bias: acidic residues; sequence EGTEDNGLEDDSRDGQE. 2 positions are modified to phosphoserine: Ser109 and Ser158. Residues Lys188 and Lys199 each participate in a glycyl lysine isopeptide (Lys-Gly) (interchain with G-Cter in SUMO2) cross-link. At Thr201 the chain carries Phosphothreonine. At Ser207 the chain carries Phosphoserine. Residues 219 to 404 form a disordered region; the sequence is ILGETCKSEP…KDEKGRVGSG (186 aa). Positions 224–233 are enriched in basic and acidic residues; the sequence is CKSEPVKEES. Lys230 participates in a covalent cross-link: Glycyl lysine isopeptide (Lys-Gly) (interchain with G-Cter in SUMO). A compositionally biased stretch (polar residues) spans 274 to 285; that stretch reads SESTAHAQSSKA. The span at 292-308 shows a compositional bias: basic and acidic residues; the sequence is VKREPAEQPGDGERTDC. Lys293 is covalently cross-linked (Glycyl lysine isopeptide (Lys-Gly) (interchain with G-Cter in SUMO)). Low complexity predominate over residues 318-329; the sequence is EQSSAASELAEA. A compositionally biased stretch (basic and acidic residues) spans 345 to 358; that stretch reads EARDSKEDGRKFDF. A compositionally biased stretch (polar residues) spans 370-382; it reads ESSTSEGADQKMS. Residues Lys380, Lys385, Lys388, Lys391, and Lys395 each participate in a glycyl lysine isopeptide (Lys-Gly) (interchain with G-Cter in SUMO2) cross-link. Basic and acidic residues predominate over residues 383 to 400; sequence SFKEEKDIKPIIKDEKGR. The region spanning 407-485 is the RRM domain; it reads RNLWVSGLSS…RMISVEKAKN (79 aa). 2 positions are modified to phosphoserine: Ser507 and Ser513. Residues Lys517, Lys524, Lys525, Lys541, Lys542, and Lys551 each participate in a glycyl lysine isopeptide (Lys-Gly) (interchain with G-Cter in SUMO2) cross-link. Positions 525–551 are enriched in basic and acidic residues; the sequence is KEEKIEKKEEKKPEDIKKEEKDQDELK. Disordered regions lie at residues 525 to 665 and 684 to 953; these read KEEK…RLQR and RERL…TRRY. The segment covering 555–564 has biased composition (polar residues); sequence TNRSRVTKSG. Residues 567 to 579 show a composition bias toward basic and acidic residues; the sequence is GMERTVVMDKSKG. Glycyl lysine isopeptide (Lys-Gly) (interchain with G-Cter in SUMO2) cross-links involve residues Lys578, Lys586, and Lys608. Composition is skewed to basic and acidic residues over residues 590-665 and 684-820; these read RSKE…RLQR and RERL…DSRD. The interval 600–953 is interaction with SAFB1; sequence DRKSESKEKR…PPYPHFTRRY (354 aa). Residue Lys616 forms a Glycyl lysine isopeptide (Lys-Gly) (interchain with G-Cter in SUMO2); alternate linkage. Residue Lys616 is modified to N6-acetyllysine; alternate. Residues 713 to 730 carry the Nuclear localization signal motif; the sequence is RRQQEQLRYEQERRPGRR. Residues Ser787 and Ser832 each carry the phosphoserine modification. Residues 843–859 are compositionally biased toward basic and acidic residues; that stretch reads GGRDWGEHNQRLEEHQA. Gly residues predominate over residues 881–890; it reads GERGLSGPSG. Ser886 carries the phosphoserine modification. An omega-N-methylarginine mark is found at Arg897 and Arg903. Residues 899-927 are compositionally biased toward gly residues; it reads GVAGRGGFAQGGHSQGHVVPGGGLEGGGV.

As to quaternary structure, interacts with SAFB/SAFB1 and SCAM1. Interacts with isoform 2 SRPK1 and inhibits its activity. In terms of tissue distribution, expressed at high levels in the CNS and at low levels in the liver. Expressed in a wide number of breast cancer cell lines.

It localises to the cytoplasm. The protein resides in the nucleus. In terms of biological role, binds to scaffold/matrix attachment region (S/MAR) DNA. Can function as an estrogen receptor corepressor and can also inhibit cell proliferation. This chain is Scaffold attachment factor B2 (SAFB2), found in Homo sapiens (Human).